Here is a 293-residue protein sequence, read N- to C-terminus: 33 kDa chaperonin (293 aa).

2 disulfide bridges follow: Cys236-Cys238 and Cys269-Cys272.

Belongs to the HSP33 family. Post-translationally, under oxidizing conditions two disulfide bonds are formed involving the reactive cysteines. Under reducing conditions zinc is bound to the reactive cysteines and the protein is inactive.

The protein resides in the cytoplasm. Functionally, redox regulated molecular chaperone. Protects both thermally unfolding and oxidatively damaged proteins from irreversible aggregation. Plays an important role in the bacterial defense system toward oxidative stress. The protein is 33 kDa chaperonin of Lactobacillus delbrueckii subsp. bulgaricus (strain ATCC BAA-365 / Lb-18).